The chain runs to 242 residues: Carboxy-S-adenosyl-L-methionine synthase (242 aa).

S-adenosyl-L-methionine contacts are provided by residues Tyr-39, 64–66 (GCS), 89–90 (DN), 117–118 (DI), Asn-132, and Arg-199.

It belongs to the class I-like SAM-binding methyltransferase superfamily. Cx-SAM synthase family. In terms of assembly, homodimer.

The catalysed reaction is prephenate + S-adenosyl-L-methionine = carboxy-S-adenosyl-L-methionine + 3-phenylpyruvate + H2O. In terms of biological role, catalyzes the conversion of S-adenosyl-L-methionine (SAM) to carboxy-S-adenosyl-L-methionine (Cx-SAM). The chain is Carboxy-S-adenosyl-L-methionine synthase from Aliivibrio salmonicida (strain LFI1238) (Vibrio salmonicida (strain LFI1238)).